The sequence spans 391 residues: Carbamoyl phosphate synthase small chain (391 aa).

The interval 1 to 202 is CPSase; that stretch reads MTQPAILVLE…AHASAGSGEE (202 aa). L-glutamine contacts are provided by serine 47, glycine 254, and glycine 256. Positions 206–391 constitute a Glutamine amidotransferase type-1 domain; sequence KVVAYDYGVK…RFVDLMAARA (186 aa). Cysteine 282 (nucleophile) is an active-site residue. L-glutamine-binding residues include leucine 283, glutamine 286, asparagine 324, glycine 326, and phenylalanine 327. Residues histidine 366 and glutamate 368 contribute to the active site.

It belongs to the CarA family. As to quaternary structure, composed of two chains; the small (or glutamine) chain promotes the hydrolysis of glutamine to ammonia, which is used by the large (or ammonia) chain to synthesize carbamoyl phosphate. Tetramer of heterodimers (alpha,beta)4.

The enzyme catalyses hydrogencarbonate + L-glutamine + 2 ATP + H2O = carbamoyl phosphate + L-glutamate + 2 ADP + phosphate + 2 H(+). It catalyses the reaction L-glutamine + H2O = L-glutamate + NH4(+). It participates in amino-acid biosynthesis; L-arginine biosynthesis; carbamoyl phosphate from bicarbonate: step 1/1. It functions in the pathway pyrimidine metabolism; UMP biosynthesis via de novo pathway; (S)-dihydroorotate from bicarbonate: step 1/3. Small subunit of the glutamine-dependent carbamoyl phosphate synthetase (CPSase). CPSase catalyzes the formation of carbamoyl phosphate from the ammonia moiety of glutamine, carbonate, and phosphate donated by ATP, constituting the first step of 2 biosynthetic pathways, one leading to arginine and/or urea and the other to pyrimidine nucleotides. The small subunit (glutamine amidotransferase) binds and cleaves glutamine to supply the large subunit with the substrate ammonia. This is Carbamoyl phosphate synthase small chain from Xanthomonas axonopodis pv. citri (strain 306).